A 308-amino-acid chain; its full sequence is Taste receptor type 2 member 41 (308 aa).

Residues 1-6 (MLSTVS) lie on the Extracellular side of the membrane. Residues 7 to 27 (VFFMSIFVLLCFLGILANGFI) form a helical membrane-spanning segment. At 28-60 (VLMLSREWLWRGRLLPSDMILLSLGTSRFCQQC) the chain is on the cytoplasmic side. A helical transmembrane segment spans residues 61–81 (VGLVNSFYYSLHLVEYSRSLA). Topologically, residues 82–90 (RQLISLHMD) are extracellular. Residues 91-111 (FLNSATFWFGTWLSVLFCIKI) form a helical membrane-spanning segment. Residues 112-128 (ANFSHPAFLWLKWRFPA) lie on the Cytoplasmic side of the membrane. Residues 129 to 149 (LVPWLLLGSILVSFIVTLMFF) form a helical membrane-spanning segment. Residues 150-184 (WGNHTVYQAFLRRKFSGNTTFKEWNRRLEIDYFMP) are Extracellular-facing. 2 N-linked (GlcNAc...) asparagine glycosylation sites follow: N152 and N167. A helical membrane pass occupies residues 185 to 205 (LKLVTTSIPCSLFLVSILLLI). Residues 206-239 (NSLRRHSQRMQHNAHSLQDPNTQAHSRALKSLIS) are Cytoplasmic-facing. A helical transmembrane segment spans residues 240–260 (FLVLYALSYVSMVIDATVVIS). Topologically, residues 261-264 (SDNV) are extracellular. A helical transmembrane segment spans residues 265–285 (WYWPWQIILYLCMSVHPFILI). The Cytoplasmic portion of the chain corresponds to 286–308 (TNNLKFRGTFRQLLLLARGFWVT).

This sequence belongs to the G-protein coupled receptor T2R family. As to expression, expressed in subsets of taste receptor cells of the tongue and palate epithelium and exclusively in gustducin-positive cells. Expressed in 15% taste bud cells in circumvallate and foliate papillae but only in 2% in fungiform papillae. Expressed in the duodenum, antrum and fundus (part of the stomach).

It is found in the membrane. Functionally, receptor that may play a role in the perception of bitterness and is gustducin-linked. May play a role in sensing the chemical composition of the gastrointestinal content. The activity of this receptor may stimulate alpha gustducin, mediate PLC-beta-2 activation and lead to the gating of TRPM5. This chain is Taste receptor type 2 member 41 (Tas2r41), found in Rattus norvegicus (Rat).